A 440-amino-acid chain; its full sequence is C4-dicarboxylate transport protein (440 aa).

The next 8 membrane-spanning stretches (helical) occupy residues 8 to 28 (LYLQ…LFPA), 40 to 60 (FIKL…VTGI), 74 to 94 (LKGL…GLVV), 147 to 167 (GDIL…AALK), 187 to 207 (IVGF…AFTV), 221 to 241 (LIAC…GLVL), 288 to 308 (VVGL…SIYL), and 354 to 374 (AATL…LLGV). The interval 419–440 (EEVEPANEPEPPAIPAGAGLHG) is disordered.

It belongs to the dicarboxylate/amino acid:cation symporter (DAACS) (TC 2.A.23) family.

The protein localises to the cell inner membrane. In terms of biological role, responsible for the transport of dicarboxylates such as succinate, fumarate, and malate from the periplasm across the membrane. The protein is C4-dicarboxylate transport protein of Anaeromyxobacter sp. (strain K).